The chain runs to 763 residues: Phosphoglycerol transferase I (763 aa).

4 helical membrane passes run 4–19 (LLSFALFLASVLIYAW), 26–48 (WWFAATLTVLGLFVVLNITLFAS), 76–98 (YILPGIGIVLGLAAVFGALGWIL), and 105–127 (PHHFGYSLLALLLALGSVDASPA).

It belongs to the OpgB family.

Its subcellular location is the cell inner membrane. The catalysed reaction is a phosphatidylglycerol + a membrane-derived-oligosaccharide D-glucose = a 1,2-diacyl-sn-glycerol + a membrane-derived-oligosaccharide 6-(glycerophospho)-D-glucose.. It functions in the pathway glycan metabolism; osmoregulated periplasmic glucan (OPG) biosynthesis. Its function is as follows. Transfers a phosphoglycerol residue from phosphatidylglycerol to the membrane-bound nascent glucan backbones. This is Phosphoglycerol transferase I from Escherichia coli O6:H1 (strain CFT073 / ATCC 700928 / UPEC).